Consider the following 163-residue polypeptide: Crossover junction endodeoxyribonuclease RuvC (163 aa).

Active-site residues include Asp7, Glu66, and Asp139. Asp7, Glu66, and Asp139 together coordinate Mg(2+).

Belongs to the RuvC family. In terms of assembly, homodimer which binds Holliday junction (HJ) DNA. The HJ becomes 2-fold symmetrical on binding to RuvC with unstacked arms; it has a different conformation from HJ DNA in complex with RuvA. In the full resolvosome a probable DNA-RuvA(4)-RuvB(12)-RuvC(2) complex forms which resolves the HJ. Mg(2+) is required as a cofactor.

The protein localises to the cytoplasm. The catalysed reaction is Endonucleolytic cleavage at a junction such as a reciprocal single-stranded crossover between two homologous DNA duplexes (Holliday junction).. Its function is as follows. The RuvA-RuvB-RuvC complex processes Holliday junction (HJ) DNA during genetic recombination and DNA repair. Endonuclease that resolves HJ intermediates. Cleaves cruciform DNA by making single-stranded nicks across the HJ at symmetrical positions within the homologous arms, yielding a 5'-phosphate and a 3'-hydroxyl group; requires a central core of homology in the junction. The consensus cleavage sequence is 5'-(A/T)TT(C/G)-3'. Cleavage occurs on the 3'-side of the TT dinucleotide at the point of strand exchange. HJ branch migration catalyzed by RuvA-RuvB allows RuvC to scan DNA until it finds its consensus sequence, where it cleaves and resolves the cruciform DNA. In Thermomicrobium roseum (strain ATCC 27502 / DSM 5159 / P-2), this protein is Crossover junction endodeoxyribonuclease RuvC.